The following is a 218-amino-acid chain: Adenylate kinase (218 aa).

14-19 serves as a coordination point for ATP; that stretch reads GAGKGT. Residues 34 to 63 form an NMP region; that stretch reads STGDMFRAAIKAGTELGKQAKALMDEGKLV. AMP is bound by residues T35, R40, 61–63, 89–92, and Q96; these read KLV and GFPR. Positions 126-163 are LID; sequence GRRVHQASGRSYHIVYNPPKVEGKDDVTGEDLIIRADD. Residues R127 and 136-137 contribute to the ATP site; that span reads SY. 2 residues coordinate AMP: R160 and R171. K204 contributes to the ATP binding site.

This sequence belongs to the adenylate kinase family. Monomer.

Its subcellular location is the cytoplasm. The catalysed reaction is AMP + ATP = 2 ADP. It participates in purine metabolism; AMP biosynthesis via salvage pathway; AMP from ADP: step 1/1. Catalyzes the reversible transfer of the terminal phosphate group between ATP and AMP. Plays an important role in cellular energy homeostasis and in adenine nucleotide metabolism. This is Adenylate kinase from Mannheimia succiniciproducens (strain KCTC 0769BP / MBEL55E).